Consider the following 274-residue polypeptide: Dermonecrotic toxin SaSicTox-betaIIB1 (274 aa).

The active site involves histidine 5. Glutamate 25 and aspartate 27 together coordinate Mg(2+). Catalysis depends on histidine 41, which acts as the Nucleophile. Cystine bridges form between cysteine 45–cysteine 51 and cysteine 47–cysteine 190. Residue aspartate 85 coordinates Mg(2+).

The protein belongs to the arthropod phospholipase D family. Class II subfamily. It depends on Mg(2+) as a cofactor. In terms of tissue distribution, expressed by the venom gland.

It localises to the secreted. The catalysed reaction is an N-(acyl)-sphingosylphosphocholine = an N-(acyl)-sphingosyl-1,3-cyclic phosphate + choline. It carries out the reaction an N-(acyl)-sphingosylphosphoethanolamine = an N-(acyl)-sphingosyl-1,3-cyclic phosphate + ethanolamine. The enzyme catalyses a 1-acyl-sn-glycero-3-phosphocholine = a 1-acyl-sn-glycero-2,3-cyclic phosphate + choline. It catalyses the reaction a 1-acyl-sn-glycero-3-phosphoethanolamine = a 1-acyl-sn-glycero-2,3-cyclic phosphate + ethanolamine. In terms of biological role, dermonecrotic toxins cleave the phosphodiester linkage between the phosphate and headgroup of certain phospholipids (sphingolipid and lysolipid substrates), forming an alcohol (often choline) and a cyclic phosphate. This toxin acts on sphingomyelin (SM). It may also act on ceramide phosphoethanolamine (CPE), lysophosphatidylcholine (LPC) and lysophosphatidylethanolamine (LPE), but not on lysophosphatidylserine (LPS), and lysophosphatidylglycerol (LPG). It acts by transphosphatidylation, releasing exclusively cyclic phosphate products as second products. Induces dermonecrosis, hemolysis, increased vascular permeability, edema, inflammatory response, and platelet aggregation. The chain is Dermonecrotic toxin SaSicTox-betaIIB1 from Sicarius albospinosus (Six-eyed crab spider).